The chain runs to 265 residues: Small ribosomal subunit protein eS1 (265 aa).

Residues Glu-234–Gly-256 form a disordered region. The span at Gly-247 to Gly-256 shows a compositional bias: basic and acidic residues.

The protein belongs to the eukaryotic ribosomal protein eS1 family. As to quaternary structure, component of the small ribosomal subunit. Mature ribosomes consist of a small (40S) and a large (60S) subunit. The 40S subunit contains about 33 different proteins and 1 molecule of RNA (18S). The 60S subunit contains about 49 different proteins and 3 molecules of RNA (28S, 5.8S and 5S).

The protein localises to the cytoplasm. In Aplysia californica (California sea hare), this protein is Small ribosomal subunit protein eS1.